Here is a 781-residue protein sequence, read N- to C-terminus: MSIRRFVRLSLLIIALVSSLCESQKNFACDISAPATAKYGFCNVSLSYEARAKDLVSRLSLKEKVQQLVNKATGVPRLGVPPYEWWSEALHGVSDVGPGVHFNGTVPGATSFPATILTAASFNTSLWLKMGEVVSTEARAMHNVGLAGLTYWSPNVNVFRDPRWGRGQETPGEDPLVVSKYAVNYVKGLQDVHDAGKSRRLKVSSCCKHYTAYDLDNWKGIDRFHFDAKVTKQDLEDTYQTPFKSCVEEGDVSSVMCSYNRVNGIPTCADPNLLRGVIRGQWRLDGYIVSDCDSIQVYFNDIHYTKTREDAVALALKAGLNMNCGDFLGKYTENAVKLKKLNGSDVDEALIYNYIVLMRLGFFDGDPKSLPFGNLGPSDVCSKDHQMLALEAAKQGIVLLENRGDLPLPKTTVKKLAVIGPNANATKVMISNYAGVPCKYTSPIQGLQKYVPEKIVYEPGCKDVKCGDQTLISAAVKAVSEADVTVLVVGLDQTVEAEGLDRVNLTLPGYQEKLVRDVANAAKKTVVLVIMSAGPIDISFAKNLSTIRAVLWVGYPGEAGGDAIAQVIFGDYNPSGRLPETWYPQEFADKVAMTDMNMRPNSTSGFPGRSYRFYTGKPIYKFGYGLSYSSFSTFVLSAPSIIHIKTNPIMNLNKTTSVDISTVNCHDLKIRIVIGVKNHGLRSGSHVVLVFWKPPKCSKSLVGGGVPLTQLVGFERVEVGRSMTEKFTVDFDVCKALSLVDTHGKRKLVTGHHKLVIGSNSDQQIYHHLNVRLAGDSTVAI.

The first 23 residues, 1 to 23, serve as a signal peptide directing secretion; it reads MSIRRFVRLSLLIIALVSSLCES. Residues asparagine 43, asparagine 103, and asparagine 123 are each glycosylated (N-linked (GlcNAc...) asparagine). Aspartate 291 is a catalytic residue. Residues asparagine 342, asparagine 424, asparagine 504, asparagine 543, asparagine 601, and asparagine 653 are each glycosylated (N-linked (GlcNAc...) asparagine).

Belongs to the glycosyl hydrolase 3 family.

It is found in the secreted. The protein resides in the extracellular space. The protein localises to the extracellular matrix. The protein is Probable beta-D-xylosidase 5 (BXL5) of Arabidopsis thaliana (Mouse-ear cress).